The chain runs to 437 residues: Peptidyl-prolyl cis-trans isomerase CYP38, chloroplastic (437 aa).

Residues 1-36 (MAAAFASLPTFSVVNSSRFPRRRIGFSCSKKPLEVR) constitute a chloroplast transit peptide. A thylakoid-targeting transit peptide spans 37 to 92 (CSSGNTRYTKQRGAFTSLKECAISLALSVGLMVSVPSIALPPNAHAVANPVIPDVS). Positions 245–437 (VKIKDNPNIE…LANPSYKIAG (193 aa)) constitute a PPIase cyclophilin-type domain.

Ubiquitous. Lower levels of expression in roots.

The protein resides in the plastid. Its subcellular location is the chloroplast thylakoid lumen. It carries out the reaction [protein]-peptidylproline (omega=180) = [protein]-peptidylproline (omega=0). Its function is as follows. Required for the assembly and stabilization of PSII, but has no PPIases activity. In Arabidopsis thaliana (Mouse-ear cress), this protein is Peptidyl-prolyl cis-trans isomerase CYP38, chloroplastic (CYP38).